Consider the following 153-residue polypeptide: UPF0768 protein PB2B2.18 (153 aa).

It belongs to the UPF0768 family.

The sequence is that of UPF0768 protein PB2B2.18 from Schizosaccharomyces pombe (strain 972 / ATCC 24843) (Fission yeast).